The sequence spans 716 residues: Cyclic nucleotide-gated ion channel 1 (716 aa).

The Cytoplasmic segment spans residues 1-97 (MNFRQEKFVR…QGPFLQRWNK (97 aa)). The helical transmembrane segment at 98–118 (IFVLACIIAVSLDPLFFYVPI) threads the bilayer. Over 119–132 (IDDAKKCLGIDKKM) the chain is Extracellular. Residues 133–153 (EITASVLRSFTDVFYVLHIIF) traverse the membrane as a helical segment. At 154-187 (QFRTGFIAPSSRVFGRGVLVEDKREIAKRYLSSH) the chain is on the cytoplasmic side. A helical membrane pass occupies residues 188–208 (FIIDILAVLPLPQMVILIIIP). Residues 209–220 (HMRGSSSLNTKN) are Extracellular-facing. Residues 221–241 (MLKFIVFFQYIPRFIRIYPLY) form a helical membrane-spanning segment. The Cytoplasmic segment spans residues 242–259 (KEVTRTSGILTETAWAGA). The helical transmembrane segment at 260–280 (AFNLFLYMLASHVFGAFWYLF) threads the bilayer. Over 281–379 (SIERETVCWK…GQNLKTSTYI (99 aa)) the chain is Extracellular. Residues 380 to 400 (WEICFAVFISIAGLVLFSFLI) traverse the membrane as a helical segment. Residues 401 to 716 (GNMQTYLQST…PAEPDFNSDD (316 aa)) lie on the Cytoplasmic side of the membrane. A nucleoside 3',5'-cyclic phosphate contacts are provided by residues 486 to 610 (MFEK…SKQL) and glutamate 557. The interval 602-617 (FRRLHSKQLRHTFRYY) is calmodulin-binding. The IQ domain maps to 622 to 651 (KTWAACFIQAAWRRYIKKKLEESLKEEENR). A disordered region spans residues 689–716 (SVRKPRMPERMPPMLLQKPAEPDFNSDD).

This sequence belongs to the cyclic nucleotide-gated cation channel (TC 1.A.1.5) family. In terms of assembly, homotetramer or heterotetramer (Potential). Binds calmodulin-2/3/5 with a higher affinity than calmodulin-1/4. In terms of tissue distribution, expressed in the whole plant but only weakly in roots.

It is found in the cell membrane. Its function is as follows. Acts as a cyclic nucleotide-gated ion channel. Can be activated by cyclic AMP which leads to an opening of the cation channel. May be responsible for cAMP-induced calcium entry in cells and thus should be involved in the calcium signal transduction. Could transport K(+), Na(+) and Pb(2+). This chain is Cyclic nucleotide-gated ion channel 1 (CNGC1), found in Arabidopsis thaliana (Mouse-ear cress).